Consider the following 254-residue polypeptide: 14-3-3-like protein RA215 (254 aa).

Belongs to the 14-3-3 family.

The protein is 14-3-3-like protein RA215 of Solanum tuberosum (Potato).